The following is a 321-amino-acid chain: Beta-ketoacyl-[acyl-carrier-protein] synthase III (321 aa).

Catalysis depends on residues cysteine 116 and histidine 248. The segment at 249-253 (QANLR) is ACP-binding. The active site involves asparagine 278.

The protein belongs to the thiolase-like superfamily. FabH family. In terms of assembly, homodimer.

It is found in the cytoplasm. It catalyses the reaction malonyl-[ACP] + acetyl-CoA + H(+) = 3-oxobutanoyl-[ACP] + CO2 + CoA. The protein operates within lipid metabolism; fatty acid biosynthesis. In terms of biological role, catalyzes the condensation reaction of fatty acid synthesis by the addition to an acyl acceptor of two carbons from malonyl-ACP. Catalyzes the first condensation reaction which initiates fatty acid synthesis and may therefore play a role in governing the total rate of fatty acid production. Possesses both acetoacetyl-ACP synthase and acetyl transacylase activities. Its substrate specificity determines the biosynthesis of branched-chain and/or straight-chain of fatty acids. This Yersinia enterocolitica serotype O:8 / biotype 1B (strain NCTC 13174 / 8081) protein is Beta-ketoacyl-[acyl-carrier-protein] synthase III.